The primary structure comprises 258 residues: Gamma carbonic anhydrase 3, mitochondrial (258 aa).

The transit peptide at 1-43 (MGTMGKAFYSVGFWIRETGQALDRLGCRLQGKNHFREQLSRHR) directs the protein to the mitochondrion. Substrate-binding positions include 86–88 (RGD) and 101–102 (QD). Zn(2+) contacts are provided by histidine 107, histidine 130, and histidine 135. Asparagine 209 contributes to the substrate binding site.

The protein belongs to the gamma-class carbonic anhydrase family. Homotrimer. Component of the oxidoreductase respiratory chain complex I; element of the extra matrix-exposed domain, which is attached to the membrane arm of this complex. The cofactor is Zn(2+).

The protein localises to the mitochondrion membrane. Its function is as follows. Enzyme involved in the catabolism of H(2)CO(3) but that does not mediates the reversible hydration of carbon dioxide. Mediates complex I assembly in mitochondria and respiration. The chain is Gamma carbonic anhydrase 3, mitochondrial (GAMMACA3) from Arabidopsis thaliana (Mouse-ear cress).